The following is a 438-amino-acid chain: L-fucose-proton symporter (438 aa).

The Cytoplasmic portion of the chain corresponds to Gly-2–Ile-26. Residues Pro-27–Gln-53 form a helical membrane-spanning segment. Topologically, residues Gln-54 to Phe-61 are periplasmic. A helical membrane pass occupies residues Gln-62–Lys-87. Topologically, residues Leu-88–Tyr-90 are cytoplasmic. Residues Lys-91–Glu-113 traverse the membrane as a helical segment. Residues Ile-114 to Tyr-117 are Periplasmic-facing. The helical transmembrane segment at Thr-118–Val-144 threads the bilayer. Residues Leu-145 to Ser-150 lie on the Cytoplasmic side of the membrane. Residues Gly-151 to Leu-178 traverse the membrane as a helical segment. The Periplasmic segment spans residues Ser-179–Ser-193. A helical transmembrane segment spans residues Pro-194–Met-227. At Leu-228–Ile-257 the chain is on the cytoplasmic side. The chain crosses the membrane as a helical span at residues Arg-258–Glu-287. The Periplasmic segment spans residues Glu-288–Thr-293. A helical membrane pass occupies residues Ala-294 to Ile-319. The Cytoplasmic portion of the chain corresponds to Ser-320 to Pro-324. The helical transmembrane segment at His-325–Ala-343 threads the bilayer. Topologically, residues Phe-344–Gly-347 are periplasmic. The chain crosses the membrane as a helical span at residues His-348–Gly-372. Topologically, residues Ile-373–Asp-379 are cytoplasmic. Residues Thr-380–Ala-407 traverse the membrane as a helical segment. The Periplasmic segment spans residues Ala-408–Asn-410. Residues Ile-411 to Arg-430 traverse the membrane as a helical segment. Topologically, residues Phe-431 to Asn-438 are cytoplasmic.

Belongs to the major facilitator superfamily. FHS transporter (TC 2.A.1.7) family.

The protein localises to the cell inner membrane. The catalysed reaction is L-fucose(in) + H(+)(in) = L-fucose(out) + H(+)(out). It carries out the reaction D-arabinose(out) + H(+)(out) = D-arabinose(in) + H(+)(in). It catalyses the reaction L-galactose(out) + H(+)(out) = L-galactose(in) + H(+)(in). Functionally, mediates the uptake of L-fucose across the boundary membrane with the concomitant transport of protons into the cell (symport system). Can also transport L-galactose and D-arabinose, but at reduced rates compared with L-fucose. Is not able to transport L-rhamnose and L-arabinose. Binds D-arabinose with the highest affinity, followed by L-fucose, and then by L-galactose. The polypeptide is L-fucose-proton symporter (fucP) (Escherichia coli (strain K12)).